The following is a 147-amino-acid chain: Transcription elongation factor Spt5 (147 aa).

The region spanning 91–122 is the KOW domain; it reads KGDVVEIIAGPFKGERAKVIRVDKHKEEVTLE.

Belongs to the archaeal Spt5 family. As to quaternary structure, heterodimer composed of Spt4 and Spt5. Interacts with RNA polymerase (RNAP). Forms a homodimer in solution.

Stimulates transcription elongation. This is Transcription elongation factor Spt5 from Methanocaldococcus jannaschii (strain ATCC 43067 / DSM 2661 / JAL-1 / JCM 10045 / NBRC 100440) (Methanococcus jannaschii).